The chain runs to 52 residues: Alpha-crystallin B chain (52 aa).

The protein belongs to the small heat shock protein (HSP20) family. In terms of assembly, homodimer. Aggregates with homologous proteins, including alpha-A-crystallin and the small heat shock protein HSPB1, to form large heteromeric complexes.

In terms of biological role, may contribute to the transparency and refractive index of the lens. This is Alpha-crystallin B chain (CRYAB) from Trachemys scripta elegans (Red-eared slider turtle).